Here is a 595-residue protein sequence, read N- to C-terminus: Beta-lactamase-like protein ARB_00930 (595 aa).

The signal sequence occupies residues 1-18 (MVVCFLWLLLPYAATTLS). N-linked (GlcNAc...) asparagine glycans are attached at residues Asn-70 and Asn-102. Catalysis depends on Ser-117, which acts as the Acyl-ester intermediate. Asn-147, Asn-156, and Asn-195 each carry an N-linked (GlcNAc...) asparagine glycan. Tyr-235 acts as the Proton acceptor in catalysis. 3 N-linked (GlcNAc...) asparagine glycosylation sites follow: Asn-249, Asn-461, and Asn-473.

It belongs to the beta-lactamase family.

The protein resides in the secreted. The catalysed reaction is a beta-lactam + H2O = a substituted beta-amino acid. This is Beta-lactamase-like protein ARB_00930 from Arthroderma benhamiae (strain ATCC MYA-4681 / CBS 112371) (Trichophyton mentagrophytes).